A 119-amino-acid polypeptide reads, in one-letter code: NADH dehydrogenase [ubiquinone] 1 subunit C2 (119 aa).

The helical transmembrane segment at 56–75 threads the bilayer; that stretch reads GLHRQLLYITAFFFAGYYLV.

Belongs to the complex I NDUFC2 subunit family. In terms of assembly, complex I is composed of 45 different subunits. Interacts with TMEM242.

It is found in the mitochondrion inner membrane. Its function is as follows. Accessory subunit of the mitochondrial membrane respiratory chain NADH dehydrogenase (Complex I), that is believed not to be involved in catalysis but required for the complex assembly. Complex I functions in the transfer of electrons from NADH to the respiratory chain. The immediate electron acceptor for the enzyme is believed to be ubiquinone. This is NADH dehydrogenase [ubiquinone] 1 subunit C2 from Pongo pygmaeus (Bornean orangutan).